Reading from the N-terminus, the 227-residue chain is Putative molybdenum transport system permease protein YvgM (227 aa).

A run of 5 helical transmembrane segments spans residues valine 17–leucine 37, phenylalanine 57–glycine 77, valine 94–tyrosine 114, valine 142–serine 162, and threonine 201–isoleucine 221. The ABC transmembrane type-1 domain occupies valine 17–isoleucine 221.

This sequence belongs to the binding-protein-dependent transport system permease family. CysTW subfamily.

Its subcellular location is the cell membrane. Could be part of the binding-protein-dependent transport system for molybdenum; probably responsible for the translocation of the substrate across the membrane. This Bacillus subtilis (strain 168) protein is Putative molybdenum transport system permease protein YvgM (yvgM).